The primary structure comprises 244 residues: 5-oxoprolinase subunit A (244 aa).

Belongs to the LamB/PxpA family. As to quaternary structure, forms a complex composed of PxpA, PxpB and PxpC.

It carries out the reaction 5-oxo-L-proline + ATP + 2 H2O = L-glutamate + ADP + phosphate + H(+). Its function is as follows. Catalyzes the cleavage of 5-oxoproline to form L-glutamate coupled to the hydrolysis of ATP to ADP and inorganic phosphate. The sequence is that of 5-oxoprolinase subunit A from Escherichia coli O139:H28 (strain E24377A / ETEC).